A 340-amino-acid chain; its full sequence is Short-chain dehydrogenase/reductase ffsI (340 aa).

Residues Leu46, Arg71, Asp96, Asn123, Tyr211, and Lys215 each coordinate NADP(+). Residue Tyr211 is the Proton acceptor of the active site. Lys215 serves as the catalytic Lowers pKa of active site Tyr.

It belongs to the short-chain dehydrogenases/reductases (SDR) family.

It participates in mycotoxin biosynthesis. Functionally, short-chain dehydrogenase/reductase; part of the gene cluster that mediates the biosynthesis of the cytotoxic leucine-containing cytochalasans, including aspochalasin C, aspochalasin E, TMC-169, flavichalasine F, aspergillin PZ, aspochalasin M and flavichalasine G. The first step in the pathway is catalyzed by the hybrid PKS-NRPS ffsA that utilizes 8 units of malonyl-CoA to iteratively assemble the octaketide chain before addition of L-leucine by the C-terminal NRPS modules. Because ffsA lacks a designated enoylreductase (ER) domain, the required activity is provided the enoyl reductase fssC. The methyltransferase (MT) domain of ffsA catalyzes the alpha-methylation at C10 and C14 using S-adenosyl-L-methionine as the methyl-donating cosubstrate. Reduction by the hydrolyase ffsE, followed by dehydration and intra-molecular Diels-Alder cyclization by the Diels-Alderase ffsF then yield the required isoindolone-fused macrocycle. A number of oxidative steps catalyzed by the tailoring cytochrome P450 monooxygenase ffsD, the FAD-linked oxidoreductase ffsJ and the short-chain dehydrogenase/reductase ffsI, are further required to afford the final products. The chain is Short-chain dehydrogenase/reductase ffsI from Aspergillus flavipes.